A 508-amino-acid polypeptide reads, in one-letter code: Bifunctional purine biosynthesis protein PurH (508 aa).

Positions 1 to 144 (MTRALLSVSD…KNFASVLPIV (144 aa)) constitute an MGS-like domain.

The protein belongs to the PurH family.

The catalysed reaction is (6R)-10-formyltetrahydrofolate + 5-amino-1-(5-phospho-beta-D-ribosyl)imidazole-4-carboxamide = 5-formamido-1-(5-phospho-D-ribosyl)imidazole-4-carboxamide + (6S)-5,6,7,8-tetrahydrofolate. It catalyses the reaction IMP + H2O = 5-formamido-1-(5-phospho-D-ribosyl)imidazole-4-carboxamide. It functions in the pathway purine metabolism; IMP biosynthesis via de novo pathway; 5-formamido-1-(5-phospho-D-ribosyl)imidazole-4-carboxamide from 5-amino-1-(5-phospho-D-ribosyl)imidazole-4-carboxamide (10-formyl THF route): step 1/1. It participates in purine metabolism; IMP biosynthesis via de novo pathway; IMP from 5-formamido-1-(5-phospho-D-ribosyl)imidazole-4-carboxamide: step 1/1. The polypeptide is Bifunctional purine biosynthesis protein PurH (Leuconostoc mesenteroides subsp. mesenteroides (strain ATCC 8293 / DSM 20343 / BCRC 11652 / CCM 1803 / JCM 6124 / NCDO 523 / NBRC 100496 / NCIMB 8023 / NCTC 12954 / NRRL B-1118 / 37Y)).